A 160-amino-acid chain; its full sequence is Phosphopantetheine adenylyltransferase (160 aa).

Thr11 lines the substrate pocket. Residues 11-12 (TF) and His19 each bind ATP. Residues Lys43, Leu75, and Arg89 each coordinate substrate. Residues 90–92 (GLR), Glu100, and 125–131 (HMFVSAS) contribute to the ATP site.

This sequence belongs to the bacterial CoaD family. Homohexamer. The cofactor is Mg(2+).

Its subcellular location is the cytoplasm. The enzyme catalyses (R)-4'-phosphopantetheine + ATP + H(+) = 3'-dephospho-CoA + diphosphate. It functions in the pathway cofactor biosynthesis; coenzyme A biosynthesis; CoA from (R)-pantothenate: step 4/5. Reversibly transfers an adenylyl group from ATP to 4'-phosphopantetheine, yielding dephospho-CoA (dPCoA) and pyrophosphate. This Methylobacillus flagellatus (strain ATCC 51484 / DSM 6875 / VKM B-1610 / KT) protein is Phosphopantetheine adenylyltransferase.